Consider the following 369-residue polypeptide: Anhydro-N-acetylmuramic acid kinase (369 aa).

Position 12 to 19 (12 to 19) interacts with ATP; that stretch reads GTSLDGVD.

This sequence belongs to the anhydro-N-acetylmuramic acid kinase family.

The catalysed reaction is 1,6-anhydro-N-acetyl-beta-muramate + ATP + H2O = N-acetyl-D-muramate 6-phosphate + ADP + H(+). It functions in the pathway amino-sugar metabolism; 1,6-anhydro-N-acetylmuramate degradation. Its pathway is cell wall biogenesis; peptidoglycan recycling. Its function is as follows. Catalyzes the specific phosphorylation of 1,6-anhydro-N-acetylmuramic acid (anhMurNAc) with the simultaneous cleavage of the 1,6-anhydro ring, generating MurNAc-6-P. Is required for the utilization of anhMurNAc either imported from the medium or derived from its own cell wall murein, and thus plays a role in cell wall recycling. The chain is Anhydro-N-acetylmuramic acid kinase from Shigella flexneri serotype 5b (strain 8401).